The following is a 161-amino-acid chain: SsrA-binding protein (161 aa).

The protein belongs to the SmpB family.

The protein resides in the cytoplasm. Its function is as follows. Required for rescue of stalled ribosomes mediated by trans-translation. Binds to transfer-messenger RNA (tmRNA), required for stable association of tmRNA with ribosomes. tmRNA and SmpB together mimic tRNA shape, replacing the anticodon stem-loop with SmpB. tmRNA is encoded by the ssrA gene; the 2 termini fold to resemble tRNA(Ala) and it encodes a 'tag peptide', a short internal open reading frame. During trans-translation Ala-aminoacylated tmRNA acts like a tRNA, entering the A-site of stalled ribosomes, displacing the stalled mRNA. The ribosome then switches to translate the ORF on the tmRNA; the nascent peptide is terminated with the 'tag peptide' encoded by the tmRNA and targeted for degradation. The ribosome is freed to recommence translation, which seems to be the essential function of trans-translation. This Vibrio campbellii (strain ATCC BAA-1116) protein is SsrA-binding protein.